We begin with the raw amino-acid sequence, 108 residues long: Protein FMC1 homolog (108 aa).

This sequence belongs to the FMC1 family.

The sequence is that of Protein FMC1 homolog from Caenorhabditis elegans.